Reading from the N-terminus, the 243-residue chain is MIVIPAIDLKDGACVRLRQGLMEDSTVFSDDPAAMARKWVEQGAKRLHLVDLNGAFAGEPVNGEVVKAIAKAYPNLPIQIGGGIRSLETIKHYLDAGVTYVIIGTKAVKEPEFVKQACDAFPGHIIVGLDAKDGYVATDGWAEVSTVKATDLAKQFAADGVSEIVYTDIARDGMMQGVNIEATVEMARAGNIPIIASGGITNMDDIKGLMAVAHEGITGAITGRAIYEGSLDLAEAQAYCDAQ.

The active-site Proton acceptor is D8. D130 acts as the Proton donor in catalysis.

The protein belongs to the HisA/HisF family.

It is found in the cytoplasm. The enzyme catalyses 1-(5-phospho-beta-D-ribosyl)-5-[(5-phospho-beta-D-ribosylamino)methylideneamino]imidazole-4-carboxamide = 5-[(5-phospho-1-deoxy-D-ribulos-1-ylimino)methylamino]-1-(5-phospho-beta-D-ribosyl)imidazole-4-carboxamide. It participates in amino-acid biosynthesis; L-histidine biosynthesis; L-histidine from 5-phospho-alpha-D-ribose 1-diphosphate: step 4/9. This is 1-(5-phosphoribosyl)-5-[(5-phosphoribosylamino)methylideneamino] imidazole-4-carboxamide isomerase from Saccharophagus degradans (strain 2-40 / ATCC 43961 / DSM 17024).